We begin with the raw amino-acid sequence, 241 residues long: MORN repeat-containing protein 3 (241 aa).

Positions 6-35 are interaction with MDM2; sequence CPQKSEPLWKEWDQKAQKNGLRHQVFAVNG. MORN repeat units lie at residues 38 to 60, 62 to 84, 91 to 113, 114 to 136, 137 to 159, 160 to 182, and 184 to 205; these read YVGE…KNGA, YEGD…DQET, YSGW…PKEY, YEGD…NGDI, YEGQ…NGNR, YEGN…DHGQ, and FEGF…GRDE. An interaction with SIRT1 region spans residues 76–100; it reads TLSLPDQETGKYKRAYSGWWKGDKK. The segment at 206–240 is interaction with TP53; it reads APQPTQFPIPEVKILDPDGVLEEALAMFKKTKEEG.

Interacts with MEIG1. Interacts with TP53, MDM2 and SIRT1; the interactions mediate post-transcriptional modifications of TP53 by MDM2 and SIRT1.

The protein localises to the cytoplasmic vesicle. It is found in the secretory vesicle. Its subcellular location is the acrosome. Functionally, assembles a suppression complex (suppresome) by tethering SIRT1 and MDM2 to regulate composite modifications of p53/TP53. Confers both deacetylation-mediated functional inactivation, by SIRT1, and ubiquitination-dependent degradation, by MDM2, of p53/TP53, promoting a proliferative and cell survival behaviors. May play a role in the regulation of spermatogenesis. In Bos taurus (Bovine), this protein is MORN repeat-containing protein 3 (MORN3).